The chain runs to 74 residues: Cecropin-P3 (74 aa).

Residues 1–13 (MFLIYLLVQTAES) form the signal peptide. Residues 45–74 (RRRSVGEEDAIPSHIEVNKFFLRKPAKEHI) constitute a propeptide, removed in mature form.

The protein belongs to the cecropin family. In terms of tissue distribution, expressed in the body wall, intestine, uterus and ovary.

Its subcellular location is the secreted. Has antibacterial activity against several Gram-positive and Gram-negative bacteria. Is weakly active against yeasts. Acts by a nonpore mechanism. The chain is Cecropin-P3 (ASCEC-3) from Ascaris suum (Pig roundworm).